The chain runs to 274 residues: Dermonecrotic toxin LcsSicTox-betaIC1 (274 aa).

H5 is an active-site residue. The Mg(2+) site is built by E25 and D27. The Nucleophile role is filled by H41. Cystine bridges form between C45–C51 and C47–C190. N66 carries N-linked (GlcNAc...) asparagine glycosylation. D85 lines the Mg(2+) pocket.

This sequence belongs to the arthropod phospholipase D family. Class II subfamily. The cofactor is Mg(2+). In terms of tissue distribution, expressed by the venom gland.

It localises to the secreted. It catalyses the reaction an N-(acyl)-sphingosylphosphocholine = an N-(acyl)-sphingosyl-1,3-cyclic phosphate + choline. The enzyme catalyses an N-(acyl)-sphingosylphosphoethanolamine = an N-(acyl)-sphingosyl-1,3-cyclic phosphate + ethanolamine. It carries out the reaction a 1-acyl-sn-glycero-3-phosphocholine = a 1-acyl-sn-glycero-2,3-cyclic phosphate + choline. The catalysed reaction is a 1-acyl-sn-glycero-3-phosphoethanolamine = a 1-acyl-sn-glycero-2,3-cyclic phosphate + ethanolamine. Its function is as follows. Dermonecrotic toxins cleave the phosphodiester linkage between the phosphate and headgroup of certain phospholipids (sphingolipid and lysolipid substrates), forming an alcohol (often choline) and a cyclic phosphate. This toxin acts on sphingomyelin (SM). It may also act on ceramide phosphoethanolamine (CPE), lysophosphatidylcholine (LPC) and lysophosphatidylethanolamine (LPE), but not on lysophosphatidylserine (LPS), and lysophosphatidylglycerol (LPG). It acts by transphosphatidylation, releasing exclusively cyclic phosphate products as second products. Induces dermonecrosis, hemolysis, increased vascular permeability, edema, inflammatory response, and platelet aggregation. This chain is Dermonecrotic toxin LcsSicTox-betaIC1, found in Loxosceles cf. spinulosa (strain GJB-2008) (Recluse spider).